The following is a 202-amino-acid chain: N-(5'-phosphoribosyl)anthranilate isomerase (202 aa).

This sequence belongs to the TrpF family.

It carries out the reaction N-(5-phospho-beta-D-ribosyl)anthranilate = 1-(2-carboxyphenylamino)-1-deoxy-D-ribulose 5-phosphate. Its pathway is amino-acid biosynthesis; L-tryptophan biosynthesis; L-tryptophan from chorismate: step 3/5. The polypeptide is N-(5'-phosphoribosyl)anthranilate isomerase (Listeria welshimeri serovar 6b (strain ATCC 35897 / DSM 20650 / CCUG 15529 / CIP 8149 / NCTC 11857 / SLCC 5334 / V8)).